Here is a 156-residue protein sequence, read N- to C-terminus: Aspartate carbamoyltransferase regulatory chain (156 aa).

The Zn(2+) site is built by C109, C114, C140, and C143.

The protein belongs to the PyrI family. Contains catalytic and regulatory chains. It depends on Zn(2+) as a cofactor.

Functionally, involved in allosteric regulation of aspartate carbamoyltransferase. This is Aspartate carbamoyltransferase regulatory chain from Methanosarcina barkeri (strain Fusaro / DSM 804).